A 424-amino-acid polypeptide reads, in one-letter code: Serine--tRNA ligase (424 aa).

231-233 (TAE) lines the L-serine pocket. 262–264 (RAE) serves as a coordination point for ATP. Glu-285 serves as a coordination point for L-serine. 349–352 (EISS) is an ATP binding site. Ser-385 is an L-serine binding site.

This sequence belongs to the class-II aminoacyl-tRNA synthetase family. Type-1 seryl-tRNA synthetase subfamily. Homodimer. The tRNA molecule binds across the dimer.

It is found in the cytoplasm. The catalysed reaction is tRNA(Ser) + L-serine + ATP = L-seryl-tRNA(Ser) + AMP + diphosphate + H(+). It catalyses the reaction tRNA(Sec) + L-serine + ATP = L-seryl-tRNA(Sec) + AMP + diphosphate + H(+). Its pathway is aminoacyl-tRNA biosynthesis; selenocysteinyl-tRNA(Sec) biosynthesis; L-seryl-tRNA(Sec) from L-serine and tRNA(Sec): step 1/1. Its function is as follows. Catalyzes the attachment of serine to tRNA(Ser). Is also able to aminoacylate tRNA(Sec) with serine, to form the misacylated tRNA L-seryl-tRNA(Sec), which will be further converted into selenocysteinyl-tRNA(Sec). This chain is Serine--tRNA ligase, found in Geobacillus thermodenitrificans (strain NG80-2).